The sequence spans 305 residues: Triplex capsid protein 2 (305 aa).

This sequence belongs to the herpesviridae TRX2 protein family. Interacts with TRX1 and major capisd protein/MCP.

Its subcellular location is the virion. The protein resides in the host nucleus. Its function is as follows. Structural component of the T=16 icosahedral capsid. The capsid is composed of pentamers and hexamers of major capsid protein/MCP, which are linked together by heterotrimers called triplexes. These triplexes are formed by a single molecule of triplex protein 1/TRX1 and two copies of triplex protein 2/TRX2. Additionally, TRX1 is required for efficient transport of TRX2 to the nucleus, which is the site of capsid assembly. This Homo sapiens (Human) protein is Triplex capsid protein 2.